Reading from the N-terminus, the 203-residue chain is Protein GrpE (203 aa).

A compositionally biased stretch (basic and acidic residues) spans 1-10; that stretch reads MSNESIKAEQ. A disordered region spans residues 1–20; sequence MSNESIKAEQDLIQEGVESE.

This sequence belongs to the GrpE family. Homodimer.

The protein resides in the cytoplasm. Functionally, participates actively in the response to hyperosmotic and heat shock by preventing the aggregation of stress-denatured proteins, in association with DnaK and GrpE. It is the nucleotide exchange factor for DnaK and may function as a thermosensor. Unfolded proteins bind initially to DnaJ; upon interaction with the DnaJ-bound protein, DnaK hydrolyzes its bound ATP, resulting in the formation of a stable complex. GrpE releases ADP from DnaK; ATP binding to DnaK triggers the release of the substrate protein, thus completing the reaction cycle. Several rounds of ATP-dependent interactions between DnaJ, DnaK and GrpE are required for fully efficient folding. This is Protein GrpE from Shewanella sp. (strain MR-4).